The sequence spans 123 residues: MLPTENRLRRREDFATAVRRGRRAGRPLLVVHLRSGATDPHAPGESAPPTRAGFVVSKAVGGAVVRNQVKRRLRHLVCDRLSALPPGSLVVVRALPGAGDADHAQLARDLDAALQRLLGGGTR.

The protein belongs to the RnpA family. Consists of a catalytic RNA component (M1 or rnpB) and a protein subunit.

It catalyses the reaction Endonucleolytic cleavage of RNA, removing 5'-extranucleotides from tRNA precursor.. In terms of biological role, RNaseP catalyzes the removal of the 5'-leader sequence from pre-tRNA to produce the mature 5'-terminus. It can also cleave other RNA substrates such as 4.5S RNA. The protein component plays an auxiliary but essential role in vivo by binding to the 5'-leader sequence and broadening the substrate specificity of the ribozyme. The chain is Ribonuclease P protein component from Streptomyces bikiniensis.